The chain runs to 92 residues: Conotoxin Im9.4 (92 aa).

The first 20 residues, 1 to 20, serve as a signal peptide directing secretion; sequence MHRSLAGSAVLMLLLLFALG. Positions 21-62 are excised as a propeptide; it reads NFVGVQPGLVTRDADNGQLMDNRRNLRLERKTMSLFKSLDKR. 3 cysteine pairs are disulfide-bonded: Cys-65–Cys-79, Cys-69–Cys-81, and Cys-75–Cys-87. At Asn-90 the chain carries Asparagine amide.

The protein belongs to the conotoxin P superfamily. In terms of tissue distribution, expressed by the venom duct.

It localises to the secreted. In terms of biological role, probable neurotoxin that inhibits ion channels. The polypeptide is Conotoxin Im9.4 (Conus imperialis (Imperial cone)).